A 142-amino-acid polypeptide reads, in one-letter code: uncharacterized protein (142 aa).

Residues 70-94 are disordered; sequence PKSVSNSKKKKEKAEKGLLRPTTKP. Positions 81 to 94 are enriched in basic and acidic residues; it reads EKAEKGLLRPTTKP.

This is an uncharacterized protein from Bacillus subtilis (strain 168).